The sequence spans 329 residues: Malate dehydrogenase (329 aa).

12–18 (GAAGQIG) is an NAD(+) binding site. R95 and R101 together coordinate substrate. NAD(+) contacts are provided by residues N108, Q115, and 132–134 (VGN). Substrate-binding residues include N134 and R165. Catalysis depends on H190, which acts as the Proton acceptor.

The protein belongs to the LDH/MDH superfamily. MDH type 2 family.

It carries out the reaction (S)-malate + NAD(+) = oxaloacetate + NADH + H(+). In terms of biological role, catalyzes the reversible oxidation of malate to oxaloacetate. The sequence is that of Malate dehydrogenase from Bordetella petrii (strain ATCC BAA-461 / DSM 12804 / CCUG 43448).